A 209-amino-acid polypeptide reads, in one-letter code: Small ribosomal subunit protein uS4 (209 aa).

The region spanning 99–162 (RRLDNMVYRL…RKNNKIIEAM (64 aa)) is the S4 RNA-binding domain.

This sequence belongs to the universal ribosomal protein uS4 family. As to quaternary structure, part of the 30S ribosomal subunit. Contacts protein S5. The interaction surface between S4 and S5 is involved in control of translational fidelity.

Its function is as follows. One of the primary rRNA binding proteins, it binds directly to 16S rRNA where it nucleates assembly of the body of the 30S subunit. With S5 and S12 plays an important role in translational accuracy. In Syntrophus aciditrophicus (strain SB), this protein is Small ribosomal subunit protein uS4.